The following is a 510-amino-acid chain: ETS translocation variant 5 (510 aa).

The tract at residues Lys132 to Arg245 is disordered. A compositionally biased stretch (low complexity) spans Thr163–Pro174. Over residues Gln211 to Glu224 the composition is skewed to polar residues. At Ser248 the chain carries Phosphoserine. Residue Lys350 forms a Glycyl lysine isopeptide (Lys-Gly) (interchain with G-Cter in SUMO2) linkage. Residues Leu368–Val448 constitute a DNA-binding region (ETS).

It belongs to the ETS family. In terms of assembly, interacts (via C-terminal) with ZMYM5 (via N-terminal 120 amino acid region). In terms of tissue distribution, in the brain, expressed predominantly in the cerebral cortex, the amygdala and the hypothalamus. Within the cerebral cortex, there is conspicuously high expression in cortical layers 2, 4 and 6 while expression is almost absent from layers 1, 3 and 5. High expression is also observed in the dorsal and ventral endopiriform claustrum. Strong expression is observed in limited parts of the amygdala including the basolateral amygdaloid nucleus, the bed stria terminalis and the central amygdaloid nucleus. Low to moderate levels are found in the hypothalamus while expression is almost absent in the thalamus. Hypothalamic expression is seen in the dorsomedial hypothalamic nucleus and also the central, dorsomedial and ventrolateral parts of the ventromedial hypothalamic nucleus. Strong expression is also identified in the nigrostriatal tract. In the mesencephalon, expression is restricted to the ventral tegmental area including the parabrachial pigmented nucleus. In the hippocampus, strongly expressed in the pyramidal cell layer. Some expression is also found in the lacunosum moleculare layer. Low levels of expression in the cerebellum, including the granular, molecular and Purkinje cell layers.

The protein resides in the nucleus. Functionally, binds to DNA sequences containing the consensus nucleotide core sequence 5'-GGAA.-3'. The chain is ETS translocation variant 5 (Etv5) from Mus musculus (Mouse).